Consider the following 81-residue polypeptide: MKPGIHPDYKKVVFMDTSTGFKFLSGSTKTSNETIEWEDGNTYPLIKVEISSDSHPFYTGKQKLADAGGRVDRFKKKYNLK.

Belongs to the bacterial ribosomal protein bL31 family. Type B subfamily. As to quaternary structure, part of the 50S ribosomal subunit.

In Halalkalibacterium halodurans (strain ATCC BAA-125 / DSM 18197 / FERM 7344 / JCM 9153 / C-125) (Bacillus halodurans), this protein is Large ribosomal subunit protein bL31B.